Reading from the N-terminus, the 403-residue chain is JmjC domain-containing histone demethylation protein 1 (403 aa).

Positions 141 to 328 (WSLREWCNYF…QQLKIVDVEK (188 aa)) constitute a JmjC domain. Thr221 provides a ligand contact to substrate. 2 residues coordinate Fe cation: His224 and Asp226. A substrate-binding site is contributed by Lys241. His296 contacts Fe cation.

This sequence belongs to the JHDM1 histone demethylase family. It depends on Fe(2+) as a cofactor.

The protein localises to the nucleus. It carries out the reaction N(6),N(6)-dimethyl-L-lysyl(36)-[histone H3] + 2 2-oxoglutarate + 2 O2 = L-lysyl(36)-[histone H3] + 2 formaldehyde + 2 succinate + 2 CO2. In terms of biological role, histone demethylase that specifically demethylates 'Lys-36' of histone H3, thereby playing a central role in histone code. This is JmjC domain-containing histone demethylation protein 1 (JHD1) from Candida glabrata (strain ATCC 2001 / BCRC 20586 / JCM 3761 / NBRC 0622 / NRRL Y-65 / CBS 138) (Yeast).